Consider the following 485-residue polypeptide: Inosine-5'-monophosphate dehydrogenase (485 aa).

2 CBS domains span residues 99-154 (IVED…LVKE) and 156-215 (MTKD…VRDE). NAD(+) contacts are provided by residues Asp247 and 294–296 (GIG). Positions 296 and 298 each coordinate K(+). IMP is bound at residue Ser299. Cys301 lines the K(+) pocket. The Thioimidate intermediate role is filled by Cys301. IMP is bound by residues 334-336 (DGG), 357-358 (GN), and 381-385 (YRGMG). Residue Arg397 is the Proton acceptor of the active site. Glu412 serves as a coordination point for IMP. K(+) contacts are provided by Glu466, Ser467, and His468.

Belongs to the IMPDH/GMPR family. As to quaternary structure, homotetramer. It depends on K(+) as a cofactor.

It carries out the reaction IMP + NAD(+) + H2O = XMP + NADH + H(+). It functions in the pathway purine metabolism; XMP biosynthesis via de novo pathway; XMP from IMP: step 1/1. With respect to regulation, mycophenolic acid (MPA) is a non-competitive inhibitor that prevents formation of the closed enzyme conformation by binding to the same site as the amobile flap. In contrast, mizoribine monophosphate (MZP) is a competitive inhibitor that induces the closed conformation. MPA is a potent inhibitor of mammalian IMPDHs but a poor inhibitor of the bacterial enzymes. MZP is a more potent inhibitor of bacterial IMPDH. In terms of biological role, catalyzes the conversion of inosine 5'-phosphate (IMP) to xanthosine 5'-phosphate (XMP), the first committed and rate-limiting step in the de novo synthesis of guanine nucleotides, and therefore plays an important role in the regulation of cell growth. The polypeptide is Inosine-5'-monophosphate dehydrogenase (Pyrococcus abyssi (strain GE5 / Orsay)).